A 346-amino-acid chain; its full sequence is Sesquiterpene synthase Agr1 (346 aa).

The Mg(2+) site is built by Asp98, Asn234, Ser238, and Glu242. A DDXXD motif motif is present at residues 98-102 (DNLSD). Residues Arg322 and Tyr323 each coordinate (2E,6E)-farnesyl diphosphate.

This sequence belongs to the terpene synthase family. Mg(2+) serves as cofactor.

The enzyme catalyses (2E,6E)-farnesyl diphosphate = delta-cadinene + diphosphate. It carries out the reaction (2E,6E)-farnesyl diphosphate = alpha-muurolene + diphosphate. The catalysed reaction is (2E,6E)-farnesyl diphosphate = gamma-muurolene + diphosphate. It catalyses the reaction (2E,6E)-farnesyl diphosphate = alpha-selinene + diphosphate. Functionally, terpene cyclase that catalyzes the cyclization of farnesyl diphosphate (FPP) to various sesquiterpenes, including alpha-muurolene, gamma-muurolene, alpha-selinene, beta-selinene, delta-cadinene, alpha-cadinol and delta-cadinol. Delta-cadinene is the major product of Agr1. In Cyclocybe aegerita (Black poplar mushroom), this protein is Sesquiterpene synthase Agr1.